A 516-amino-acid chain; its full sequence is Acetylcholine receptor subunit alpha-like (516 aa).

The first 21 residues, 1-21, serve as a signal peptide directing secretion; that stretch reads MRSVTKYYLHGVVLFATGCAG. The Extracellular segment spans residues 22 to 243; sequence NPDAKRLYDD…ITMRRKTLFY (222 aa). N-linked (GlcNAc...) asparagine glycans are attached at residues Asn-45 and Asn-132. Disulfide bonds link Cys-149–Cys-163 and Cys-222–Cys-223. Asn-233 carries N-linked (GlcNAc...) asparagine glycosylation. 3 helical membrane-spanning segments follow: residues 244–264, 274–294, and 306–326; these read TVNL…VFYL, LSIS…EIIP, and FVLF…VVLN. Topologically, residues 327-465 are cytoplasmic; sequence VHFRSPQTHT…WKYVAMVLDR (139 aa). Residues 466-486 form a helical membrane-spanning segment; sequence PFLWIFTLAVVVGSAGIILQA.

It belongs to the ligand-gated ion channel (TC 1.A.9) family. Acetylcholine receptor (TC 1.A.9.1) subfamily.

The protein resides in the postsynaptic cell membrane. It localises to the cell membrane. After binding acetylcholine, the AChR responds by an extensive change in conformation that affects all subunits and leads to opening of an ion-conducting channel across the plasma membrane. In Manduca sexta (Tobacco hawkmoth), this protein is Acetylcholine receptor subunit alpha-like (ARA1).